The chain runs to 626 residues: Solute carrier family 13 member 4 (626 aa).

Helical transmembrane passes span 13-33 (LLLVVCVPLLLLPLPVLHPSS), 52-72 (AVPLGAAALVPAFLYPFFGVL), 77-97 (VAAEYFKNTTLLLVGVICVAA), and 113-133 (VLMAGAKPGMLLLCFMCCTTL). The span at 217 to 228 (SITNPIKTANQH) shows a compositional bias: polar residues. The interval 217-252 (SITNPIKTANQHQGKKQHPSQEKPQVLTPSPRKQKL) is disordered. Transmembrane regions (helical) follow at residues 274–294 (YSATIGGLTTIIGTSTSLIFL), 309–329 (FGTWFLFSFPISLIMLVVSWF), 372–392 (ISYPEMVTGFFFILMTVLWFT), 414–434 (ATVSVFLGFLLFLIPAKKPCF), 466–486 (IVILVGGGYALASGSKSSGLS), 499–519 (LPPWAVTLLACILVSIVTEFV), 543–563 (PLYTLIPVTMCISFAVMLPVG), and 590–610 (VIGLVIVMVAINTWGVSLFHL).

It belongs to the SLC13A/DASS transporter (TC 2.A.47) family. NADC subfamily. In terms of tissue distribution, highly expressed in placenta and testis with intermediate levels in brain and lower levels in heart, thymus and liver.

The protein localises to the membrane. The catalysed reaction is sulfate(out) + 3 Na(+)(out) = sulfate(in) + 3 Na(+)(in). With respect to regulation, transport is inhibited by thiosulfate, phosphate, molybdate, selenate and tungstate. Not inhibited by oxalate, citrate, succinate, phenol red or 4,4'-diisothiocyanostilbene-2,2'-disulfonic acid (DIDS). Its function is as follows. Sodium:sulfate symporter that mediates sulfate reabsorption in the high endothelial venules (HEV). This chain is Solute carrier family 13 member 4 (SLC13A4), found in Homo sapiens (Human).